The sequence spans 137 residues: Large ribosomal subunit protein eL28 (137 aa).

Residue S2 is modified to N-acetylserine. Glycyl lysine isopeptide (Lys-Gly) (interchain with G-Cter in SUMO2) cross-links involve residues K58 and K65. S115 carries the phosphoserine modification.

This sequence belongs to the eukaryotic ribosomal protein eL28 family. As to quaternary structure, component of the large ribosomal subunit.

Its subcellular location is the cytoplasm. Its function is as follows. Component of the large ribosomal subunit. The ribosome is a large ribonucleoprotein complex responsible for the synthesis of proteins in the cell. This chain is Large ribosomal subunit protein eL28 (RPL28), found in Oryctolagus cuniculus (Rabbit).